An 87-amino-acid chain; its full sequence is Toxin Cll4 (87 aa).

The N-terminal stretch at 1-19 (MNSLLMITACLALIGTVWA) is a signal peptide. Residues 20–85 (KEGYIVNYHD…VWPLPKKRCN (66 aa)) enclose the LCN-type CS-alpha/beta domain. Cystine bridges form between C31–C84, C35–C60, C44–C65, and C48–C67. At N85 the chain carries Asparagine amide.

This sequence belongs to the long (4 C-C) scorpion toxin superfamily. Sodium channel inhibitor family. Beta subfamily. Expressed by the venom gland.

It is found in the secreted. Beta toxins bind voltage-independently at site-4 of sodium channels (Nav) and shift the voltage of activation toward more negative potentials thereby affecting sodium channel activation and promoting spontaneous and repetitive firing. The chain is Toxin Cll4 from Centruroides limpidus (Mexican scorpion).